Consider the following 395-residue polypeptide: Ribosomal RNA small subunit methyltransferase H (395 aa).

Residues 101–103 (GGH), Asp-120, Tyr-147, Asp-171, and Gln-178 contribute to the S-adenosyl-L-methionine site.

The protein belongs to the methyltransferase superfamily. RsmH family.

It is found in the cytoplasm. The enzyme catalyses cytidine(1402) in 16S rRNA + S-adenosyl-L-methionine = N(4)-methylcytidine(1402) in 16S rRNA + S-adenosyl-L-homocysteine + H(+). Specifically methylates the N4 position of cytidine in position 1402 (C1402) of 16S rRNA. This is Ribosomal RNA small subunit methyltransferase H from Mycobacterium marinum (strain ATCC BAA-535 / M).